Consider the following 140-residue polypeptide: PDZ domain-containing protein 11 (140 aa).

The region spanning 47–129 (IVTLKKPPGA…ISMRVRFFPY (83 aa)) is the PDZ domain.

As to quaternary structure, interacts with ATP2B1, ATP2B2, ATP2B3, ATP2B4 and ATP7A. Interacts with PLEKHA7 (via WW domains) at zonula adherens; this interaction is essential for the interaction between PLEKHA7 and the ADAM10-binding protein TSPAN33. Interacts with SLC5A6.

It is found in the cytoplasm. It localises to the cell junction. Its subcellular location is the adherens junction. The protein resides in the cell membrane. Functionally, mediates docking of ADAM10 to zonula adherens by interacting with PLEKHA7 which is required for PLEKHA7 to interact with the ADAM10-binding protein TSPAN33. This Bos taurus (Bovine) protein is PDZ domain-containing protein 11 (PDZD11).